The chain runs to 142 residues: Nucleoside diphosphate kinase (142 aa).

The ATP site is built by Lys-9, Phe-57, Arg-85, Thr-91, Arg-102, and Asn-112. The active-site Pros-phosphohistidine intermediate is His-115.

Belongs to the NDK family. In terms of assembly, homotetramer. Mg(2+) is required as a cofactor.

It localises to the cytoplasm. The catalysed reaction is a 2'-deoxyribonucleoside 5'-diphosphate + ATP = a 2'-deoxyribonucleoside 5'-triphosphate + ADP. It carries out the reaction a ribonucleoside 5'-diphosphate + ATP = a ribonucleoside 5'-triphosphate + ADP. In terms of biological role, major role in the synthesis of nucleoside triphosphates other than ATP. The ATP gamma phosphate is transferred to the NDP beta phosphate via a ping-pong mechanism, using a phosphorylated active-site intermediate. The polypeptide is Nucleoside diphosphate kinase (Dehalococcoides mccartyi (strain ATCC BAA-2100 / JCM 16839 / KCTC 5957 / BAV1)).